The sequence spans 160 residues: Cytochrome b6-f complex subunit 4 (160 aa).

Transmembrane regions (helical) follow at residues 36–56 (LLYT…GLAL), 95–115 (LLGV…PFIE), and 127–147 (PIAT…GIGA).

Belongs to the cytochrome b family. PetD subfamily. The 4 large subunits of the cytochrome b6-f complex are cytochrome b6, subunit IV (17 kDa polypeptide, petD), cytochrome f and the Rieske protein, while the 4 small subunits are petG, petL, petM and petN. The complex functions as a dimer.

The protein resides in the plastid. Its subcellular location is the chloroplast thylakoid membrane. Functionally, component of the cytochrome b6-f complex, which mediates electron transfer between photosystem II (PSII) and photosystem I (PSI), cyclic electron flow around PSI, and state transitions. In Cyanidioschyzon merolae (strain NIES-3377 / 10D) (Unicellular red alga), this protein is Cytochrome b6-f complex subunit 4.